A 565-amino-acid chain; its full sequence is Dihydroxy-acid dehydratase (565 aa).

Cys50 contributes to the [2Fe-2S] cluster binding site. Asp82 contacts Mg(2+). Residue Cys123 coordinates [2Fe-2S] cluster. Residues Asp124 and Lys125 each contribute to the Mg(2+) site. N6-carboxylysine is present on Lys125. Position 195 (Cys195) interacts with [2Fe-2S] cluster. Glu447 lines the Mg(2+) pocket. The active-site Proton acceptor is the Ser473.

Belongs to the IlvD/Edd family. In terms of assembly, homodimer. Requires [2Fe-2S] cluster as cofactor. It depends on Mg(2+) as a cofactor.

It catalyses the reaction (2R)-2,3-dihydroxy-3-methylbutanoate = 3-methyl-2-oxobutanoate + H2O. The enzyme catalyses (2R,3R)-2,3-dihydroxy-3-methylpentanoate = (S)-3-methyl-2-oxopentanoate + H2O. Its pathway is amino-acid biosynthesis; L-isoleucine biosynthesis; L-isoleucine from 2-oxobutanoate: step 3/4. It functions in the pathway amino-acid biosynthesis; L-valine biosynthesis; L-valine from pyruvate: step 3/4. Functionally, functions in the biosynthesis of branched-chain amino acids. Catalyzes the dehydration of (2R,3R)-2,3-dihydroxy-3-methylpentanoate (2,3-dihydroxy-3-methylvalerate) into 2-oxo-3-methylpentanoate (2-oxo-3-methylvalerate) and of (2R)-2,3-dihydroxy-3-methylbutanoate (2,3-dihydroxyisovalerate) into 2-oxo-3-methylbutanoate (2-oxoisovalerate), the penultimate precursor to L-isoleucine and L-valine, respectively. In Halorhodospira halophila (strain DSM 244 / SL1) (Ectothiorhodospira halophila (strain DSM 244 / SL1)), this protein is Dihydroxy-acid dehydratase.